Consider the following 231-residue polypeptide: Ribose-5-phosphate isomerase A (231 aa).

Substrate contacts are provided by residues Ser23 to Thr26, Asp80 to Asp83, and Lys93 to Gly96. Glu102 functions as the Proton acceptor in the catalytic mechanism. Substrate is bound at residue Lys120.

The protein belongs to the ribose 5-phosphate isomerase family. In terms of assembly, homodimer.

It carries out the reaction aldehydo-D-ribose 5-phosphate = D-ribulose 5-phosphate. It participates in carbohydrate degradation; pentose phosphate pathway; D-ribose 5-phosphate from D-ribulose 5-phosphate (non-oxidative stage): step 1/1. Catalyzes the reversible conversion of ribose-5-phosphate to ribulose 5-phosphate. The chain is Ribose-5-phosphate isomerase A from Prochlorococcus marinus subsp. pastoris (strain CCMP1986 / NIES-2087 / MED4).